We begin with the raw amino-acid sequence, 81 residues long: Short neurotoxin 1 (81 aa).

Positions Met-1–Thr-21 are cleaved as a signal peptide. Cystine bridges form between Cys-24–Cys-43, Cys-38–Cys-60, Cys-62–Cys-73, and Cys-74–Cys-79.

This sequence belongs to the three-finger toxin family. Short-chain subfamily. Type I alpha-neurotoxin sub-subfamily. In terms of tissue distribution, expressed by the venom gland.

The protein localises to the secreted. Binds to muscle nicotinic acetylcholine receptor (nAChR) and inhibit acetylcholine from binding to the receptor, thereby impairing neuromuscular transmission. This chain is Short neurotoxin 1, found in Hydrophis peronii (Spiny-headed seasnake).